Here is a 273-residue protein sequence, read N- to C-terminus: Phosphatidylglycerol--prolipoprotein diacylglyceryl transferase (273 aa).

7 consecutive transmembrane segments (helical) span residues 21–41 (ISVRWYGLMYLVGFMFALWLA), 60–80 (LLFAGFLGVVLGGRIGYVLFY), 95–115 (VWTGGMSFHGGLLGVITAMLW), 124–144 (FFGVADMIAPLVPFGLGMGRM), 176–196 (SQLYEMALEGIVLFFILNWFI), 203–223 (GSVSGLFLAGYGTFRFLVEYV), and 236–256 (FISMGQILSLPMVIIGVLMMV). A 1,2-diacyl-sn-glycero-3-phospho-(1'-sn-glycerol) is bound at residue Arg-143.

It belongs to the Lgt family.

It is found in the cell inner membrane. The catalysed reaction is L-cysteinyl-[prolipoprotein] + a 1,2-diacyl-sn-glycero-3-phospho-(1'-sn-glycerol) = an S-1,2-diacyl-sn-glyceryl-L-cysteinyl-[prolipoprotein] + sn-glycerol 1-phosphate + H(+). It participates in protein modification; lipoprotein biosynthesis (diacylglyceryl transfer). Catalyzes the transfer of the diacylglyceryl group from phosphatidylglycerol to the sulfhydryl group of the N-terminal cysteine of a prolipoprotein, the first step in the formation of mature lipoproteins. In Vibrio atlanticus (strain LGP32) (Vibrio splendidus (strain Mel32)), this protein is Phosphatidylglycerol--prolipoprotein diacylglyceryl transferase.